The primary structure comprises 92 residues: Neuropeptide ShK-like2 (92 aa).

Positions 1–23 (MTTIRCVLFAVLLFAYCALLIKA) are cleaved as a signal peptide. The propeptide occupies 24-51 (RSIDAEAEKTWQEEETKTVAEKSPLKKR). 3 disulfides stabilise this stretch: Cys-53/Cys-92, Cys-61/Cys-85, and Cys-70/Cys-89.

Transcripts are first expressed mostly in the endoderm (with rare ectodermal cells) in the late planulae. They are mostly expressed in endodermal ganglion cells in the body column and tentacles in primary polyps, as well as in a small number of ectodermal sensory neurons in tentacles and body wall. They are not expressed in nematocytes. In terms of tissue distribution, transcripts are predominantly expressed in ectodermal sensory neurons in early and late planulae. They are expressed in endodermal ganglion cells in the body column and tentacles in primary polyps, as well as in a small number of ectodermal neurons in pharynx. They are not expressed in nematocytes.

In terms of biological role, in vivo, this neuropeptide induces contraction paralysis followed by death (within 2 hours) on 4 zebrafish larvae on the 15 tested. Also induces body contraction in Nematostella 11-dpf polyps. The chain is Neuropeptide ShK-like2 from Nematostella vectensis (Starlet sea anemone).